Reading from the N-terminus, the 65-residue chain is Putative primary metabolism protein prl65 (65 aa).

The interval 1-25 (MTKYSKGNKVEYHPIGGPSGTSTST) is disordered.

May play a role in primary metabolism. The protein is Putative primary metabolism protein prl65 of Schizosaccharomyces pombe (strain 972 / ATCC 24843) (Fission yeast).